Consider the following 313-residue polypeptide: Ribosomal RNA small subunit methyltransferase H (313 aa).

Residues G35–H37, D55, F81, D103, and Q110 each bind S-adenosyl-L-methionine.

It belongs to the methyltransferase superfamily. RsmH family.

The protein localises to the cytoplasm. It catalyses the reaction cytidine(1402) in 16S rRNA + S-adenosyl-L-methionine = N(4)-methylcytidine(1402) in 16S rRNA + S-adenosyl-L-homocysteine + H(+). Functionally, specifically methylates the N4 position of cytidine in position 1402 (C1402) of 16S rRNA. The sequence is that of Ribosomal RNA small subunit methyltransferase H from Pseudomonas paraeruginosa (strain DSM 24068 / PA7) (Pseudomonas aeruginosa (strain PA7)).